An 89-amino-acid chain; its full sequence is N.vectensis toxin 7 (89 aa).

Positions 1 to 21 (MASFFKIAVICLVMLVVCSNA) are cleaved as a signal peptide. 3 cysteine pairs are disulfide-bonded: C44-C77, C46-C69, and C62-C78.

Expressed in ectodermal gland cells.

Functionally, probable toxin. In Nematostella vectensis (Starlet sea anemone), this protein is N.vectensis toxin 7.